Here is a 554-residue protein sequence, read N- to C-terminus: Probable ATP-binding cassette sub-family F member 3 homolog (554 aa).

ABC transporter domains lie at 89–285 (GDLH…ASAR) and 351–554 (IEFV…GLGV). ATP-binding positions include 122–129 (GRNGIGKT) and 383–390 (GANGQGKS).

It belongs to the ABC transporter superfamily. ABCF family. EF3 subfamily.

The protein is Probable ATP-binding cassette sub-family F member 3 homolog of Encephalitozoon cuniculi (strain GB-M1) (Microsporidian parasite).